The following is a 116-amino-acid chain: UPF0102 protein LA_2381 (116 aa).

Belongs to the UPF0102 family.

The chain is UPF0102 protein LA_2381 from Leptospira interrogans serogroup Icterohaemorrhagiae serovar Lai (strain 56601).